The primary structure comprises 230 residues: PsbP-like protein 1, chloroplastic (230 aa).

It belongs to the PsbP family.

Its subcellular location is the plastid. The protein resides in the chloroplast thylakoid lumen. In terms of biological role, required for efficient repair of photodamaged PSII, but not tightly associated with the complex. The sequence is that of PsbP-like protein 1, chloroplastic (PPL1) from Arabidopsis thaliana (Mouse-ear cress).